We begin with the raw amino-acid sequence, 236 residues long: Biosynthetic peptidoglycan transglycosylase (236 aa).

A helical transmembrane segment spans residues 12 to 31 (ALFWFAAGSIVLVLVFRWVP).

This sequence belongs to the glycosyltransferase 51 family.

Its subcellular location is the cell inner membrane. The catalysed reaction is [GlcNAc-(1-&gt;4)-Mur2Ac(oyl-L-Ala-gamma-D-Glu-L-Lys-D-Ala-D-Ala)](n)-di-trans,octa-cis-undecaprenyl diphosphate + beta-D-GlcNAc-(1-&gt;4)-Mur2Ac(oyl-L-Ala-gamma-D-Glu-L-Lys-D-Ala-D-Ala)-di-trans,octa-cis-undecaprenyl diphosphate = [GlcNAc-(1-&gt;4)-Mur2Ac(oyl-L-Ala-gamma-D-Glu-L-Lys-D-Ala-D-Ala)](n+1)-di-trans,octa-cis-undecaprenyl diphosphate + di-trans,octa-cis-undecaprenyl diphosphate + H(+). It participates in cell wall biogenesis; peptidoglycan biosynthesis. Peptidoglycan polymerase that catalyzes glycan chain elongation from lipid-linked precursors. The protein is Biosynthetic peptidoglycan transglycosylase of Pseudomonas putida (strain W619).